We begin with the raw amino-acid sequence, 79 residues long: D-alanyl carrier protein (79 aa).

Residues 1–77 enclose the Carrier domain; that stretch reads MDVKAEVIEI…KIVEGVTELR (77 aa). Ser-35 carries the post-translational modification O-(pantetheine 4'-phosphoryl)serine.

The protein belongs to the DltC family. Post-translationally, 4'-phosphopantetheine is transferred from CoA to a specific serine of apo-DCP.

The protein localises to the cytoplasm. The protein operates within cell wall biogenesis; lipoteichoic acid biosynthesis. Its function is as follows. Carrier protein involved in the D-alanylation of lipoteichoic acid (LTA). The loading of thioester-linked D-alanine onto DltC is catalyzed by D-alanine--D-alanyl carrier protein ligase DltA. The DltC-carried D-alanyl group is further transferred to cell membrane phosphatidylglycerol (PG) by forming an ester bond, probably catalyzed by DltD. D-alanylation of LTA plays an important role in modulating the properties of the cell wall in Gram-positive bacteria, influencing the net charge of the cell wall. The polypeptide is D-alanyl carrier protein (Streptococcus thermophilus (strain CNRZ 1066)).